The following is a 404-amino-acid chain: Argininosuccinate synthase (404 aa).

ATP is bound by residues 10-18 and alanine 37; that span reads AYSGGLDTS. Tyrosine 89 and serine 94 together coordinate L-citrulline. Glycine 119 contributes to the ATP binding site. Threonine 121, asparagine 125, and aspartate 126 together coordinate L-aspartate. Asparagine 125 contacts L-citrulline. Residues arginine 129, serine 178, serine 187, glutamate 263, and tyrosine 275 each contribute to the L-citrulline site.

This sequence belongs to the argininosuccinate synthase family. Type 1 subfamily. In terms of assembly, homotetramer.

It is found in the cytoplasm. The enzyme catalyses L-citrulline + L-aspartate + ATP = 2-(N(omega)-L-arginino)succinate + AMP + diphosphate + H(+). Its pathway is amino-acid biosynthesis; L-arginine biosynthesis; L-arginine from L-ornithine and carbamoyl phosphate: step 2/3. This Photobacterium profundum (strain SS9) protein is Argininosuccinate synthase.